Here is a 331-residue protein sequence, read N- to C-terminus: Nodulation protein D 2 (331 aa).

The HTH lysR-type domain occupies Leu-6 to Thr-63. The H-T-H motif DNA-binding region spans Leu-23–Ala-42.

Belongs to the LysR transcriptional regulatory family.

Its function is as follows. NodD regulates the expression of the nodABCFE genes which encode other nodulation proteins. NodD is also a negative regulator of its own expression. Binds flavonoids as inducers. The sequence is that of Nodulation protein D 2 (nodD2) from Bradyrhizobium elkanii.